Reading from the N-terminus, the 771-residue chain is UPF0313 protein PSPTO_4928 (771 aa).

The Radical SAM core domain maps to 371–649; sequence AYDMIRFSVN…KAFLRYHDPK (279 aa). [4Fe-4S] cluster-binding residues include C385, C389, and C392. The tract at residues 683–771 is disordered; sequence DTYQSARRKN…KPARKPVVPR (89 aa). 2 stretches are compositionally biased toward basic and acidic residues: residues 726–735 and 745–754; these read KPWDKREEAK and AAKERMDAAK. The segment covering 756–765 has biased composition (basic residues); that stretch reads GKGKGGKPAR.

This sequence belongs to the UPF0313 family. [4Fe-4S] cluster serves as cofactor.

This is UPF0313 protein PSPTO_4928 from Pseudomonas syringae pv. tomato (strain ATCC BAA-871 / DC3000).